The chain runs to 618 residues: DNA mismatch repair protein MutL (618 aa).

The segment covering 366–378 has biased composition (low complexity); it reads AEPTAAREPATPR. The segment at 366-403 is disordered; the sequence is AEPTAAREPATPRYSDGASGGNGGRQSAGGWPHAQPGY. Positions 383–392 are enriched in gly residues; it reads ASGGNGGRQS.

It belongs to the DNA mismatch repair MutL/HexB family.

This protein is involved in the repair of mismatches in DNA. It is required for dam-dependent methyl-directed DNA mismatch repair. May act as a 'molecular matchmaker', a protein that promotes the formation of a stable complex between two or more DNA-binding proteins in an ATP-dependent manner without itself being part of a final effector complex. The chain is DNA mismatch repair protein MutL from Salmonella typhi.